The following is a 463-amino-acid chain: L-seryl-tRNA(Sec) selenium transferase (463 aa).

Lysine 295 carries the post-translational modification N6-(pyridoxal phosphate)lysine.

The protein belongs to the SelA family. In terms of assembly, homodecamer; pentamer of dimers. Binds only one seryl-tRNA(Sec) per dimer. Pyridoxal 5'-phosphate serves as cofactor.

Its subcellular location is the cytoplasm. It carries out the reaction L-seryl-tRNA(Sec) + selenophosphate + H(+) = L-selenocysteinyl-tRNA(Sec) + phosphate. The protein operates within aminoacyl-tRNA biosynthesis; selenocysteinyl-tRNA(Sec) biosynthesis; selenocysteinyl-tRNA(Sec) from L-seryl-tRNA(Sec) (bacterial route): step 1/1. In terms of biological role, converts seryl-tRNA(Sec) to selenocysteinyl-tRNA(Sec) required for selenoprotein biosynthesis. In Salmonella paratyphi B (strain ATCC BAA-1250 / SPB7), this protein is L-seryl-tRNA(Sec) selenium transferase.